A 158-amino-acid chain; its full sequence is 2-C-methyl-D-erythritol 2,4-cyclodiphosphate synthase (158 aa).

Residues aspartate 9 and histidine 11 each coordinate a divalent metal cation. Residues 9–11 (DVH) and 35–36 (HS) each bind 4-CDP-2-C-methyl-D-erythritol 2-phosphate. A divalent metal cation is bound at residue histidine 43. 4-CDP-2-C-methyl-D-erythritol 2-phosphate contacts are provided by residues 57–59 (DIG), 62–66 (FPDTD), 101–107 (AQAPKMA), 133–136 (TTTE), phenylalanine 140, and arginine 143.

The protein belongs to the IspF family. In terms of assembly, homotrimer. The cofactor is a divalent metal cation.

The catalysed reaction is 4-CDP-2-C-methyl-D-erythritol 2-phosphate = 2-C-methyl-D-erythritol 2,4-cyclic diphosphate + CMP. The protein operates within isoprenoid biosynthesis; isopentenyl diphosphate biosynthesis via DXP pathway; isopentenyl diphosphate from 1-deoxy-D-xylulose 5-phosphate: step 4/6. Involved in the biosynthesis of isopentenyl diphosphate (IPP) and dimethylallyl diphosphate (DMAPP), two major building blocks of isoprenoid compounds. Catalyzes the conversion of 4-diphosphocytidyl-2-C-methyl-D-erythritol 2-phosphate (CDP-ME2P) to 2-C-methyl-D-erythritol 2,4-cyclodiphosphate (ME-CPP) with a corresponding release of cytidine 5-monophosphate (CMP). In Vibrio vulnificus (strain CMCP6), this protein is 2-C-methyl-D-erythritol 2,4-cyclodiphosphate synthase.